Consider the following 319-residue polypeptide: MSGDTCLTAVCPASGAKPKTYSFKGGCLGNKYIRLNVGGCLYYTTVQVLTRHDTMLKAMFSGRMEVLTDKEGWILIDRCGKHFGSILNYLRDDTIALPKSRHEIKELMAEAKYYLIQGLVDKCQTALQDTNDTYEAVCNIPIITSPKEEEKLIESSAKPVVKLLYNRSNNKYSYTSNSDDHLLKNIELFDKLSLRFNGRVLFIKDVIGDEICCWSFYGQGRKLAEVCCTSIVYATEKKQTKVEFPEARIYEETLNVLLYETPRVPDNSLLEATSRIRSQASHSEDDDGFELRDRVRRIHVKRYSTYDDRQLGHQSAYRD.

The 69-residue stretch at 31-99 folds into the BTB domain; sequence KYIRLNVGGC…LRDDTIALPK (69 aa).

The protein belongs to the BACURD family. Component of the BCR(TNFAIP1) E3 ubiquitin ligase complex, at least composed of cul3, tnfaip1/bacurd2 and rbx1.

The protein localises to the cytoplasm. It localises to the nucleus. The protein resides in the endosome. It functions in the pathway protein modification; protein ubiquitination. In terms of biological role, substrate-specific adapter of a BCR (BTB-CUL3-RBX1) E3 ubiquitin-protein ligase complex involved in regulation of cytoskeleton structure. The BCR(TNFAIP1) E3 ubiquitin ligase complex mediates the ubiquitination of target proteins, leading to their degradation by the proteasome. This Xenopus laevis (African clawed frog) protein is BTB/POZ domain-containing adapter for CUL3-mediated RhoA degradation protein 2 (tnfaip1).